Reading from the N-terminus, the 88-residue chain is Chaplin-F (88 aa).

An N-terminal signal peptide occupies residues 1–36 (MYNPKEHFSMSRIAKGLALTSVAAAAVAGTAGVAAA). The Chaplin domain maps to 47-87 (SPGVLSGNVVQVPVHIPVNVCGNTIDVIGLLNPAFGNECEN). Cysteine 67 and cysteine 85 are joined by a disulfide.

Belongs to the chaplin family. Short chaplin subfamily. As to quaternary structure, homodimer; disulfide linked. About 20% of ChpF isolated from cell wall forms disulfide-bonded homodimers.

It localises to the cell surface. The protein resides in the secreted. It is found in the cell wall. Its subcellular location is the fimbrium. Its function is as follows. One of 8 partially redundant surface-active proteins required for efficient formation of aerial mycelium; the short chaplins assemble into a hydrophobic, amyloidal fibrillar surface layer that envelopes and protects aerial hyphae and spores, presumably anchored to the long chaplins. Chaplins have an overlapping function with the surface-active SapB peptide; chaplins are essential on minimal medium while on rich medium both chaplins and SapB are required for efficient aerial hyphae formation. Chaplins are also involved in cell attachment to a hydrophobic surface. Forms amyloid fibrils in vitro probably composed of stacked beta-sheets, at low extracellular concentrations individually restores the ability to form aerial hyphae to a chaplin-deficient strain. A small chaplin extract (ChpD, ChpE, ChpF, ChpG and ChpH) self-assembles into 2 different amyloids; small fibrils at the air-water interface form an amphipathic membrane that resembles spore-surface structures involved in aerial hyphae formation, and hydrophilic fibrils in solution that resemble the fibers that attach cells to a hydrophobic surface. At the air-water interface the hydrophilic surface is in contact with water (probably equivalent to the peptidoglycan layer), while the hydrophobic face is exposed to the air, making the surface of the aerial hyphae hydrophobic. A small chaplin extract applied to a chaplin-deficient strain restores aerial hyphae formation. The small chaplin extract forms an amyloid-like structure similar to that seen on the surface of cells without rodlets (rdlA-rdlB deletions), and is highly surface active, reducing surface tension from 72 to 26 mJ/m(2), which probably allows escape of hyphae from an aqueous environment into air. ChpF alone is less surface active at pH 3.0 than at pH 10.0, it reduces the surface tension of water from 72.8 mN/m to 50 mN/m at pH 3.0 or to 37 mN/m at pH 10.0. ChpF and ChpG are sufficient to restore the rodlet layer and hydrophobicity to a strain deleted for the other 6 chaplin genes. The chain is Chaplin-F from Streptomyces coelicolor (strain ATCC BAA-471 / A3(2) / M145).